A 283-amino-acid chain; its full sequence is Putative UTP--glucose-1-phosphate uridylyltransferase (283 aa).

This sequence belongs to the UDPGP type 2 family.

The enzyme catalyses alpha-D-glucose 1-phosphate + UTP + H(+) = UDP-alpha-D-glucose + diphosphate. The sequence is that of Putative UTP--glucose-1-phosphate uridylyltransferase from Methanocaldococcus jannaschii (strain ATCC 43067 / DSM 2661 / JAL-1 / JCM 10045 / NBRC 100440) (Methanococcus jannaschii).